The sequence spans 465 residues: Asparagine--tRNA ligase (465 aa).

This sequence belongs to the class-II aminoacyl-tRNA synthetase family. In terms of assembly, homodimer.

The protein localises to the cytoplasm. The enzyme catalyses tRNA(Asn) + L-asparagine + ATP = L-asparaginyl-tRNA(Asn) + AMP + diphosphate + H(+). The chain is Asparagine--tRNA ligase from Clostridium perfringens (strain SM101 / Type A).